We begin with the raw amino-acid sequence, 87 residues long: Small ribosomal subunit protein bS18 (87 aa).

Positions 1-10 (MAGKSSGDRR) are enriched in basic and acidic residues. The disordered stretch occupies residues 1–23 (MAGKSSGDRRKLLRGAKVGKNAA).

The protein belongs to the bacterial ribosomal protein bS18 family. Part of the 30S ribosomal subunit. Forms a tight heterodimer with protein bS6.

In terms of biological role, binds as a heterodimer with protein bS6 to the central domain of the 16S rRNA, where it helps stabilize the platform of the 30S subunit. In Clavibacter sepedonicus (Clavibacter michiganensis subsp. sepedonicus), this protein is Small ribosomal subunit protein bS18.